A 1077-amino-acid polypeptide reads, in one-letter code: Response regulator SSK1 (1077 aa).

The 147-residue stretch at 854–1000 (NVLIVEDNII…FLERKVMEWG (147 aa)) folds into the Response regulatory domain. D903 carries the 4-aspartylphosphate modification.

The protein belongs to the SSK1 family.

The protein resides in the cytoplasm. Two-domain response regulator protein in the two-component signal transduction system of the HOG1 pathway. Involved in multi-stress responses and is essential for conidiation, secondary metabolism, autophagy and endocyrosis. In addition, regulates mycelial growth, cell nucleus development, septum formation, and organelle development. Also regulates trap formation and thus plays a crucial role in pathogenicity. The chain is Response regulator SSK1 from Arthrobotrys oligospora (strain ATCC 24927 / CBS 115.81 / DSM 1491) (Nematode-trapping fungus).